Reading from the N-terminus, the 449-residue chain is MVAVAILAAGKGTRMKSDLPKVLHPLGGRSLVERVIESCALIKPERICTIVGYRAAEVKMALAHLPHLEFVEQTEQLGTGHAVQQLLEPLKDFVGDVVILNGDVPLLRPETIADLVSTHQKNNNDATLLTAQLPNPTGYGRVFCDGDNLVTQIVEHRDCNDAQRKNNRINAGVYCFKWGVLAEALPKLTTNNDQQEYYLTDVILHCDKVMAMDVADFQEISGINDRFQLSAAYEILQDRIKEKWMKAGVMIHQPDTVTIDDTVQLEPDVMIEPQTHLRGNSLIKTGCRLGPGSLIENSVIEANTTILYSVVSDSQVGENAQIGPYTHIRGQAKVGEQCRIGNFVEVKKSTIGNNTNMAHLSYIGDATLGAKVNIGAGTITANYDGVNKHQTVIGDRSKTGANSVLVAPITIGEDVTIAAGSTITKDVDNDCLVVARARQKEIKGWRLQS.

The tract at residues 1–226 is pyrophosphorylase; the sequence is MVAVAILAAG…FQEISGINDR (226 aa). UDP-N-acetyl-alpha-D-glucosamine-binding positions include 7–10, lysine 21, glutamine 73, and 78–79; these read LAAG and GT. Residue aspartate 103 coordinates Mg(2+). UDP-N-acetyl-alpha-D-glucosamine is bound by residues glycine 140, glutamate 155, asparagine 170, and asparagine 224. Asparagine 224 serves as a coordination point for Mg(2+). Residues 227 to 247 form a linker region; it reads FQLSAAYEILQDRIKEKWMKA. Residues 248-449 are N-acetyltransferase; sequence GVMIHQPDTV…KEIKGWRLQS (202 aa). UDP-N-acetyl-alpha-D-glucosamine is bound by residues arginine 329 and lysine 347. The active-site Proton acceptor is the histidine 359. UDP-N-acetyl-alpha-D-glucosamine is bound by residues tyrosine 362 and asparagine 373. Residues alanine 376, 382 to 383, alanine 419, and arginine 436 each bind acetyl-CoA; that span reads NY.

The protein in the N-terminal section; belongs to the N-acetylglucosamine-1-phosphate uridyltransferase family. It in the C-terminal section; belongs to the transferase hexapeptide repeat family. As to quaternary structure, homotrimer. It depends on Mg(2+) as a cofactor.

It localises to the cytoplasm. It catalyses the reaction alpha-D-glucosamine 1-phosphate + acetyl-CoA = N-acetyl-alpha-D-glucosamine 1-phosphate + CoA + H(+). The catalysed reaction is N-acetyl-alpha-D-glucosamine 1-phosphate + UTP + H(+) = UDP-N-acetyl-alpha-D-glucosamine + diphosphate. Its pathway is nucleotide-sugar biosynthesis; UDP-N-acetyl-alpha-D-glucosamine biosynthesis; N-acetyl-alpha-D-glucosamine 1-phosphate from alpha-D-glucosamine 6-phosphate (route II): step 2/2. It participates in nucleotide-sugar biosynthesis; UDP-N-acetyl-alpha-D-glucosamine biosynthesis; UDP-N-acetyl-alpha-D-glucosamine from N-acetyl-alpha-D-glucosamine 1-phosphate: step 1/1. It functions in the pathway bacterial outer membrane biogenesis; LPS lipid A biosynthesis. In terms of biological role, catalyzes the last two sequential reactions in the de novo biosynthetic pathway for UDP-N-acetylglucosamine (UDP-GlcNAc). The C-terminal domain catalyzes the transfer of acetyl group from acetyl coenzyme A to glucosamine-1-phosphate (GlcN-1-P) to produce N-acetylglucosamine-1-phosphate (GlcNAc-1-P), which is converted into UDP-GlcNAc by the transfer of uridine 5-monophosphate (from uridine 5-triphosphate), a reaction catalyzed by the N-terminal domain. The chain is Bifunctional protein GlmU from Picosynechococcus sp. (strain ATCC 27264 / PCC 7002 / PR-6) (Agmenellum quadruplicatum).